The primary structure comprises 112 residues: Mu-ctenitoxin-Pn1a (112 aa).

The N-terminal stretch at 1 to 19 (MKLLGIFLVASFAFVLSFG) is a signal peptide. Positions 20-33 (EEMIEGENPLEDQR) are excised as a propeptide. Disulfide bonds link Cys-39/Cys-56, Cys-46/Cys-62, Cys-53/Cys-85, Cys-55/Cys-73, Cys-64/Cys-71, Cys-91/Cys-106, and Cys-102/Cys-110. Gly-111 carries the glycine amide modification.

The protein belongs to the neurotoxin 04 (omega-agtx) family. 02 (Tx1) subfamily. In terms of processing, contains 7 disulfide bonds. Expressed by the venom gland.

The protein resides in the secreted. Its function is as follows. Reversible inhibitor of neuronal sodium channels (Nav1.2/ SCN2A) that binds in proximity to site 1 and displays increasing affinity as the membrane potential is depolarized. Induces excitatory symptoms and spastic paralysis in mice. This Phoneutria nigriventer (Brazilian armed spider) protein is Mu-ctenitoxin-Pn1a.